Reading from the N-terminus, the 389-residue chain is Liposome tubulation protein MamY (389 aa).

The Cytoplasmic segment spans residues 1–31; sequence MAIAAIMGDVLMLMGFNKAAFGKLNSASRAA. Residues 32-52 form a helical membrane-spanning segment; that stretch reads LIGAVIWAVLSIVYLTIFNGW. The Lumenal segment spans residues 53 to 62; that stretch reads KNLFTMLPHE. Residues 63–83 traverse the membrane as a helical segment; the sequence is FFIVLLSIALPIGLTVLILML. Residues 84–389 are Cytoplasmic-facing; that stretch reads SRIVKSVDTL…TETAPDSGMD (306 aa).

This sequence belongs to the magnetosome MamY family.

It is found in the magnetosome membrane. Its function is as follows. Causes tubulation when added to magnetosome-derived liposomes, binds liposomes; may be involved in constriction of the cell inner membrane to form mature magnetosomes. Binds preferentially to cardiolipin, a component of bacterial membranes, with very poor to no binding of other tested (phospho)lipids. Addition of cardiolipin to magnetosome-derived lipids increases tubulation. May function with MamX, MamZ amd Mms6. In Paramagnetospirillum magneticum (strain ATCC 700264 / AMB-1) (Magnetospirillum magneticum), this protein is Liposome tubulation protein MamY.